The following is a 449-amino-acid chain: Exodeoxyribonuclease 7 large subunit (449 aa).

This sequence belongs to the XseA family. Heterooligomer composed of large and small subunits.

It localises to the cytoplasm. It catalyses the reaction Exonucleolytic cleavage in either 5'- to 3'- or 3'- to 5'-direction to yield nucleoside 5'-phosphates.. In terms of biological role, bidirectionally degrades single-stranded DNA into large acid-insoluble oligonucleotides, which are then degraded further into small acid-soluble oligonucleotides. The sequence is that of Exodeoxyribonuclease 7 large subunit from Lacticaseibacillus casei (strain BL23) (Lactobacillus casei).